We begin with the raw amino-acid sequence, 355 residues long: Cyclic nucleotide-gated potassium channel RHE_CH03180 (355 aa).

The Cytoplasmic segment spans residues 1–12 (MSAVPFSKISTP). The chain crosses the membrane as a helical span at residues 13-30 (LNALFATIGLLVVAALTT). At 31–38 (QGLTGQER) the chain is on the periplasmic side. Residues 39-61 (LVFELLLAAIWLAYVLQLSGTLL) traverse the membrane as a helical segment. At 62 to 73 (SRRRRLSGEMTA) the chain is on the cytoplasmic side. Residues 74 to 93 (LVIDLLAVLVPAAAFLFVGS) traverse the membrane as a helical segment. Residues 94 to 111 (RDRDLYCAIWLLKPLRDS) traverse the membrane as a helical segment. The Cytoplasmic segment spans residues 112-128 (TFFRLLAKVVANESRNL). A helical transmembrane segment spans residues 129–149 (LGVTSVFGIVLFGAALAGYII). Residues 150–160 (ERDVQPDKFGS) are Periplasmic-facing. An intramembrane region (pore-forming) is located at residues 161–179 (IPQAMWWAVVTLSTTGYGD). The Selectivity filter motif lies at 174 to 179 (TTGYGD). Residues 180–184 (EIPQS) are Periplasmic-facing. A helical membrane pass occupies residues 185 to 209 (LAGRVLAGLVMMSGIGIFALWAGIL). Residues 210-355 (ATGFYEEVRR…LERRGGPPKE (146 aa)) lie on the Cytoplasmic side of the membrane. 3',5'-cyclic AMP-binding positions include 297–298 (GE), 307–308 (RS), and Arg348.

It belongs to the potassium channel family. As to quaternary structure, homotetramer.

The protein localises to the cell membrane. Its function is as follows. Cyclic nucleotide-regulated potassium channel activated by cAMP. The protein is Cyclic nucleotide-gated potassium channel RHE_CH03180 of Rhizobium etli (strain ATCC 51251 / DSM 11541 / JCM 21823 / NBRC 15573 / CFN 42).